The primary structure comprises 194 residues: uncharacterized protein (194 aa).

A signal peptide spans 1 to 29 (MKKAFLVFLSVVLVTTVFLVKQQESVAQA). A coiled-coil region spans residues 104-131 (KVDELLKKAGQIVEEKVEAAKEIAASKD). The helical transmembrane segment at 149–171 (YFYYVSYVAAAGALILIILAIDI) threads the bilayer.

The protein localises to the membrane. This is an uncharacterized protein from Bacillus subtilis (strain 168).